Here is a 574-residue protein sequence, read N- to C-terminus: MPRGLELLIAQTILQGFDAQYGRFLEVTSGAQQRFEQADWHAVQLAMKNRIHLYDHHVGLVVEQLRCITNGQSTDAAFLLRVKEHYTRLLPDYPRFEIAESFFNSVYCRLFDHRSLTPERLFIFSSQPERRFRTIPRPLAKDFHPDHGWESLLMRVISDLPLRLRWQNKSRDIHYIIRHLTETLGTDNLAESHLQVANELFYRNKAAWLVGKLITPSGTLPFLLPIHQTDDGELFIDTCLTTTAEASIVFGFARSYFMVYAALVEWLREILPGKTTAELYMAIGCQKHAKTESYREYLVYLQGCNEQFIEAPGIRGMVMLVFTLPGFDRVFKVIKDKFAPQKEMSAAHVRACYQLVKEHDRVGRMADTQEFENFVLEKRHISPALMELLLQEAAEKITDLGEQIVIRHLYIERRMVPLNIWLEQVEGQQLRDAIEEYGNAIRQLAAANIFPGDMLFKNFGVTRHGRVVFYDYDEICYMTEVNFRDIPPPRYPEDELASEPWYSVSPGDVFPEEFRHWLCADPRIGPLFEEMHADLFRADYWRALQNRIREGHVEDVYAYRRRQRFSVRYGEMLF.

ATP is bound by residues 311–317 (APGIRGM) and lysine 332. Aspartate 367 is an active-site residue.

The protein belongs to the AceK family.

The protein resides in the cytoplasm. The catalysed reaction is L-seryl-[isocitrate dehydrogenase] + ATP = O-phospho-L-seryl-[isocitrate dehydrogenase] + ADP + H(+). Its function is as follows. Bifunctional enzyme which can phosphorylate or dephosphorylate isocitrate dehydrogenase (IDH) on a specific serine residue. This is a regulatory mechanism which enables bacteria to bypass the Krebs cycle via the glyoxylate shunt in response to the source of carbon. When bacteria are grown on glucose, IDH is fully active and unphosphorylated, but when grown on acetate or ethanol, the activity of IDH declines drastically concomitant with its phosphorylation. This is Isocitrate dehydrogenase kinase/phosphatase from Shigella boydii serotype 4 (strain Sb227).